A 503-amino-acid chain; its full sequence is Aromatase (503 aa).

Transmembrane regions (helical) follow at residues 19-39 (EVAPVASIAILLLTGFLLLVW), 51-71 (GYFLGIGPLISHCRFLWMGIG), and 303-323 (MLIAAPDTMSVSVFFMLFLIA). Substrate contacts are provided by aspartate 309 and methionine 374. A heme-binding site is contributed by cysteine 437.

The protein belongs to the cytochrome P450 family. Heme is required as a cofactor.

The protein localises to the endoplasmic reticulum membrane. The protein resides in the microsome membrane. It carries out the reaction testosterone + 3 reduced [NADPH--hemoprotein reductase] + 3 O2 = 17beta-estradiol + formate + 3 oxidized [NADPH--hemoprotein reductase] + 4 H2O + 4 H(+). The catalysed reaction is androst-4-ene-3,17-dione + 3 reduced [NADPH--hemoprotein reductase] + 3 O2 = estrone + formate + 3 oxidized [NADPH--hemoprotein reductase] + 4 H2O + 4 H(+). It catalyses the reaction androst-4-ene-3,17-dione + reduced [NADPH--hemoprotein reductase] + O2 = 19-hydroxyandrost-4-ene-3,17-dione + oxidized [NADPH--hemoprotein reductase] + H2O + H(+). The enzyme catalyses 19-hydroxyandrost-4-ene-3,17-dione + reduced [NADPH--hemoprotein reductase] + O2 = 19-oxo-androst-4-ene-3,17-dione + oxidized [NADPH--hemoprotein reductase] + 2 H2O + H(+). It carries out the reaction 19-oxo-androst-4-ene-3,17-dione + reduced [NADPH--hemoprotein reductase] + O2 = estrone + formate + oxidized [NADPH--hemoprotein reductase] + H2O + 2 H(+). The catalysed reaction is estrone + reduced [NADPH--hemoprotein reductase] + O2 = 2-hydroxyestrone + oxidized [NADPH--hemoprotein reductase] + H2O + H(+). It catalyses the reaction 17beta-hydroxy-5alpha-androstan-3-one + reduced [NADPH--hemoprotein reductase] + O2 = 17beta,19-dihydroxy-3-oxo-5alpha-androstanone + oxidized [NADPH--hemoprotein reductase] + H2O + H(+). The enzyme catalyses 17beta,19-dihydroxy-3-oxo-5alpha-androstanone + reduced [NADPH--hemoprotein reductase] + O2 = 17beta-hydroxy-3,19-dioxo-5alpha-androstanone + oxidized [NADPH--hemoprotein reductase] + 2 H2O + H(+). It carries out the reaction 17beta-hydroxy-3,19-dioxo-5alpha-androstanone + reduced [NADPH--hemoprotein reductase] + O2 = 17beta-hydroxy-3-oxo-19-nor-5alpha-androst-1-ene + formate + oxidized [NADPH--hemoprotein reductase] + H2O + 2 H(+). It functions in the pathway steroid hormone biosynthesis. Functionally, a cytochrome P450 monooxygenase that catalyzes the conversion of C19 androgens, androst-4-ene-3,17-dione (androstenedione) and testosterone to the C18 estrogens, estrone and estradiol, respectively. Catalyzes three successive oxidations of C19 androgens: two conventional oxidations at C19 yielding 19-hydroxy and 19-oxo/19-aldehyde derivatives, followed by a third oxidative aromatization step that involves C1-beta hydrogen abstraction combined with cleavage of the C10-C19 bond to yield a phenolic A ring and formic acid. Alternatively, the third oxidative reaction yields a 19-norsteroid and formic acid. Converts dihydrotestosterone to delta1,10-dehydro 19-nordihydrotestosterone and may play a role in homeostasis of this potent androgen. Also displays 2-hydroxylase activity toward estrone. Mechanistically, uses molecular oxygen inserting one oxygen atom into a substrate, and reducing the second into a water molecule, with two electrons provided by NADPH via cytochrome P450 reductase (CPR; NADPH-ferrihemoprotein reductase). The polypeptide is Aromatase (CYP19A1) (Leucopleurus acutus (Atlantic white-sided dolphin)).